The following is a 440-amino-acid chain: Ribosomal protein uS12 methylthiotransferase RimO (440 aa).

The MTTase N-terminal domain maps to 5–116 (PTIAISHLGC…IVNVIERAEQ (112 aa)). [4Fe-4S] cluster-binding residues include Cys14, Cys50, Cys79, Cys154, Cys158, and Cys161. Residues 140 to 370 (TTTEGVAYLR…ALQQPISWRK (231 aa)) form the Radical SAM core domain. The TRAM domain maps to 372–438 (QQEVGKTVEV…EYDLFGQVVS (67 aa)).

The protein belongs to the methylthiotransferase family. RimO subfamily. The cofactor is [4Fe-4S] cluster.

The protein localises to the cytoplasm. The catalysed reaction is L-aspartate(89)-[ribosomal protein uS12]-hydrogen + (sulfur carrier)-SH + AH2 + 2 S-adenosyl-L-methionine = 3-methylsulfanyl-L-aspartate(89)-[ribosomal protein uS12]-hydrogen + (sulfur carrier)-H + 5'-deoxyadenosine + L-methionine + A + S-adenosyl-L-homocysteine + 2 H(+). Catalyzes the methylthiolation of an aspartic acid residue of ribosomal protein uS12. The protein is Ribosomal protein uS12 methylthiotransferase RimO of Trichormus variabilis (strain ATCC 29413 / PCC 7937) (Anabaena variabilis).